We begin with the raw amino-acid sequence, 143 residues long: MTTTPRQPLFCAHADTNGDPGRCACGQQLADVGPATPPPPWCEPGTEPIWEQLTERYGGVTICQWTRYFPAGDPVAADVWIAADDRVVDGRVLRTQPAIHYTEPPVLGIGPAAARRLAAELLNAADTLDDGRRQLDDLGEHRR.

This is an uncharacterized protein from Mycobacterium tuberculosis (strain CDC 1551 / Oshkosh).